The chain runs to 312 residues: Salivary protein SG34 (312 aa).

Residues methionine 1 to serine 20 form the signal peptide. Positions asparagine 95 to glutamine 158 form a coiled coil.

Belongs to the salivary protein SG34 family. Female salivary gland (at protein level). Low-level expression in ovary.

In terms of biological role, possible serine protease. Functionally, (Microbial infection) Modulates replication of duck Tembusu virus in salivary glands and virus release into the saliva, probably via the regulation of antimicrobial peptides expression in response to virus infection. Its function is as follows. (Microbial infection) Enhances replication of dengue virus type 2 in human keratinocytes, probably by suppressing the production of type I interferons and antimicrobial peptides in response to virus infection. This Aedes aegypti (Yellowfever mosquito) protein is Salivary protein SG34.